The following is a 196-amino-acid chain: Carnitine operon protein CaiE (196 aa).

The tract at residues 173 to 196 (TQPLRQMEENRPRLQGTTDVTPKR) is disordered. Residues 187-196 (QGTTDVTPKR) are compositionally biased toward polar residues.

Belongs to the transferase hexapeptide repeat family.

It functions in the pathway amine and polyamine metabolism; carnitine metabolism. Its function is as follows. Overproduction of CaiE stimulates the activity of CaiB and CaiD. In Shigella dysenteriae serotype 1 (strain Sd197), this protein is Carnitine operon protein CaiE.